Reading from the N-terminus, the 527-residue chain is Cytochrome b5 reductase 4 (527 aa).

A disordered region spans residues 1–24; the sequence is MLNVPSQAFPAAGSQQRVAPAGQS. The Cytochrome b5 heme-binding domain occupies 56–132; the sequence is LIEVTEDELK…LKECLVGRMA (77 aa). The heme site is built by His-91 and His-114. Positions 138-171 are disordered; that stretch reads ALQAHTEKTESTHLNGLSAPPSLRPEPLSAPLPA. One can recognise a CS domain in the interval 173 to 264; sequence DHRPRYDWFQ…SVKEKWTQLG (92 aa). Residues 281–392 form the FAD-binding FR-type domain; the sequence is LFYRECVLLS…GGPEGSFTLR (112 aa). Residues 372–387 and 399–431 each bind FAD; these read ANLPIGASLSVGGPEG and HLYMLAAGTGFTPMARLIRLALQDFTVIRKMKL.

Belongs to the flavoprotein pyridine nucleotide cytochrome reductase family. FAD serves as cofactor.

The protein resides in the endoplasmic reticulum. The enzyme catalyses 2 Fe(III)-[cytochrome b5] + NADH = 2 Fe(II)-[cytochrome b5] + NAD(+) + H(+). In terms of biological role, NADH-cytochrome b5 reductase involved in endoplasmic reticulum stress response pathway. This chain is Cytochrome b5 reductase 4 (cyb5r4), found in Danio rerio (Zebrafish).